Consider the following 288-residue polypeptide: Eukaryotic translation initiation factor 3 subunit F-2 (288 aa).

In terms of domain architecture, MPN spans 12–149 (VLLHPLVLFQ…TRIFCAVATG (138 aa)).

It belongs to the eIF-3 subunit F family. In terms of assembly, component of the eukaryotic translation initiation factor 3 (eIF-3) complex. The eIF-3 complex interacts with pix.

The protein resides in the cytoplasm. Component of the eukaryotic translation initiation factor 3 (eIF-3) complex, which is involved in protein synthesis of a specialized repertoire of mRNAs and, together with other initiation factors, stimulates binding of mRNA and methionyl-tRNAi to the 40S ribosome. The eIF-3 complex specifically targets and initiates translation of a subset of mRNAs involved in cell proliferation. The sequence is that of Eukaryotic translation initiation factor 3 subunit F-2 from Drosophila persimilis (Fruit fly).